The chain runs to 921 residues: MEYKNTLLMPKTEFPMRGNLPKREPAMQEKWAEMNIYEKVQEHTKGRPLFVLHDGPPYANGDIHMGHALNKVLKDFIVRYKSMTGFCAPYVPGWDTHGLPIEQALTNKGVKRKEMTVAEFRKLCAEYAYEQVERQREQFKRLGVRADWDNPYITLEPAYEAQQIKVFGDMAKKGYIYKGQKPVYWSPTSESALAEAEIEYQDKKSASIYVAFPVKDGKNVLEGDEKYIIWTTTPWTLPANLGISVHPELEYAIVKVNDEKYIIASELFETVAKTLEWENAEVVKTVKGSELEYTVAKHPFYDRDSLVMLGDHVTTDAGTGCVHTAPGHGEDDFVVGKKYGLEVLCPVDDKGVLTEEAPGFEGLFYDKANKPITEKLEEVGALLKLTFITHSYPHDWRTKKPIIFRATAQWFASIEAFRKELLEAVAETKWVPAWGETRLHNMVRDRGDWCISRQRAWGVPIPVFYAENGDPIITDETINHVADLFREHGSNVWFEREAKDLLPEGFTHPGSPNGEFRKETDIMDVWFDSGSSHQAVLEERDDLQRPADLYLEGSDQYRGWFNSSLSTAVAVTGKAPYKGVLSHGFVLDGEGRKMSKSIGNIVVPKKIMDQLGGDILRLWVSSVDYQSDVRISDDILKQVAEVYRKIRNTFRFLLGNLDDFKPSENTVAVAELREVDRYMLVKLNDLITKVKEAYETYDFAAVYHAIHNFCTIDLSSFYLDFAKDILYIEGANHEDRRAIQTVLYDVLVALTKLVTPILPHTADEVWPYIPGVTEESVQLTDMPEAVQLDDAEALKTKWDAFMTLRDDVLKALEVARNEKVIGKSLNASITLYPTAEMKAMLESINEDLKQLFIVSEYKLGGMMEEAPADAPKYEHTAVVVAQATGETCERCWVVSETIGKDAEHETLCERCATVVKENYVK.

The 'HIGH' region motif lies at 57-67; the sequence is PYANGDIHMGH. Position 552 (Glu-552) interacts with L-isoleucyl-5'-AMP. A 'KMSKS' region motif is present at residues 593–597; the sequence is KMSKS. Lys-596 contributes to the ATP binding site. Positions 888, 891, 908, and 911 each coordinate Zn(2+).

The protein belongs to the class-I aminoacyl-tRNA synthetase family. IleS type 1 subfamily. Monomer. Zn(2+) is required as a cofactor.

It is found in the cytoplasm. It catalyses the reaction tRNA(Ile) + L-isoleucine + ATP = L-isoleucyl-tRNA(Ile) + AMP + diphosphate. Its function is as follows. Catalyzes the attachment of isoleucine to tRNA(Ile). As IleRS can inadvertently accommodate and process structurally similar amino acids such as valine, to avoid such errors it has two additional distinct tRNA(Ile)-dependent editing activities. One activity is designated as 'pretransfer' editing and involves the hydrolysis of activated Val-AMP. The other activity is designated 'posttransfer' editing and involves deacylation of mischarged Val-tRNA(Ile). The protein is Isoleucine--tRNA ligase 1 of Bacillus thuringiensis subsp. konkukian (strain 97-27).